A 224-amino-acid chain; its full sequence is uncharacterized protein (224 aa).

Transmembrane regions (helical) follow at residues 32–52 (ILTL…PLVV), 60–80 (LFTN…IYFF), 100–120 (IIYL…SGLG), 130–150 (AIAY…LFGF), and 162–182 (LGFS…FGII).

This sequence belongs to the derlin family.

The protein resides in the endoplasmic reticulum membrane. This is an uncharacterized protein from Schizosaccharomyces pombe (strain 972 / ATCC 24843) (Fission yeast).